Consider the following 185-residue polypeptide: ATP-dependent protease subunit HslV (185 aa).

Threonine 12 is an active-site residue. Positions 168, 171, and 174 each coordinate Na(+).

It belongs to the peptidase T1B family. HslV subfamily. As to quaternary structure, a double ring-shaped homohexamer of HslV is capped on each side by a ring-shaped HslU homohexamer. The assembly of the HslU/HslV complex is dependent on binding of ATP.

Its subcellular location is the cytoplasm. It carries out the reaction ATP-dependent cleavage of peptide bonds with broad specificity.. With respect to regulation, allosterically activated by HslU binding. In terms of biological role, protease subunit of a proteasome-like degradation complex believed to be a general protein degrading machinery. This Cereibacter sphaeroides (strain ATCC 17023 / DSM 158 / JCM 6121 / CCUG 31486 / LMG 2827 / NBRC 12203 / NCIMB 8253 / ATH 2.4.1.) (Rhodobacter sphaeroides) protein is ATP-dependent protease subunit HslV.